A 98-amino-acid polypeptide reads, in one-letter code: NADH-ubiquinone oxidoreductase chain 4L (98 aa).

Transmembrane regions (helical) follow at residues 1–21 (MSLT…GLLM), 29–49 (SLLC…VIIL), and 61–81 (IILL…LVMV).

Belongs to the complex I subunit 4L family. In terms of assembly, core subunit of respiratory chain NADH dehydrogenase (Complex I) which is composed of 45 different subunits.

It is found in the mitochondrion inner membrane. The catalysed reaction is a ubiquinone + NADH + 5 H(+)(in) = a ubiquinol + NAD(+) + 4 H(+)(out). Functionally, core subunit of the mitochondrial membrane respiratory chain NADH dehydrogenase (Complex I) which catalyzes electron transfer from NADH through the respiratory chain, using ubiquinone as an electron acceptor. Part of the enzyme membrane arm which is embedded in the lipid bilayer and involved in proton translocation. This Uroderma bilobatum (Tent-making bat) protein is NADH-ubiquinone oxidoreductase chain 4L (MT-ND4L).